We begin with the raw amino-acid sequence, 209 residues long: Heat shock protein beta-1 (209 aa).

The residue at position 12 (arginine 12) is an Omega-N-methylarginine. Serine 13 carries the post-translational modification Phosphoserine. Serine 15 carries the post-translational modification Phosphoserine; by MAPKAPK2 and MAPKAPK3. A Phosphoserine modification is found at serine 27. Residues 74 to 209 (APAYSRALSR…AGKSEQSGAK (136 aa)) form an interaction with TGFB1I1 region. The 109-residue stretch at 80–188 (ALSRQLSSGV…QSAEITIPVT (109 aa)) folds into the sHSP domain. Residues serine 82 and serine 86 each carry the phosphoserine; by MAPKAPK2, MAPKAPK3 and MAPKAPK5 modification. 3 positions are modified to phosphoserine: serine 87, serine 90, and serine 102. The residue at position 127 (lysine 127) is an N6-acetyllysine. A Phosphothreonine modification is found at threonine 178. Phosphoserine is present on residues serine 180 and serine 203.

Belongs to the small heat shock protein (HSP20) family. As to quaternary structure, homooligomer. Homodimer; becomes monomeric upon activation. Heterooligomer; with HSPB6. Associates with alpha- and beta-tubulin. Interacts with TGFB1I1. Interacts with CRYAB. Interacts with HSPB8. Interacts with HSPBAP1. Phosphorylated upon exposure to protein kinase C activators and heat shock. Phosphorylation by MAPKAPK2 and MAPKAPK3 in response to stress dissociates HSPB1 from large small heat-shock protein (sHsps) oligomers and impairs its chaperone activity and ability to protect against oxidative stress effectively. Phosphorylation by MAPKAPK5 in response to PKA stimulation induces F-actin rearrangement.

It localises to the cytoplasm. The protein localises to the nucleus. It is found in the cytoskeleton. Its subcellular location is the spindle. In terms of biological role, small heat shock protein which functions as a molecular chaperone probably maintaining denatured proteins in a folding-competent state. Plays a role in stress resistance and actin organization. Through its molecular chaperone activity may regulate numerous biological processes including the phosphorylation and the axonal transport of neurofilament proteins. This Canis lupus familiaris (Dog) protein is Heat shock protein beta-1 (HSPB1).